A 274-amino-acid polypeptide reads, in one-letter code: Protein RecA (274 aa).

43–50 (GPESSGKT) lines the ATP pocket.

Belongs to the RecA family.

The protein resides in the cytoplasm. Functionally, can catalyze the hydrolysis of ATP in the presence of single-stranded DNA, the ATP-dependent uptake of single-stranded DNA by duplex DNA, and the ATP-dependent hybridization of homologous single-stranded DNAs. It interacts with LexA causing its activation and leading to its autocatalytic cleavage. The protein is Protein RecA of Neisseria pharyngis.